Consider the following 196-residue polypeptide: Elongation factor Ts (196 aa).

Residues 80–83 (TDFV) are involved in Mg(2+) ion dislocation from EF-Tu.

It belongs to the EF-Ts family. Heterotetramer composed of two EF-Ts.EF-Tu dimer complexes.

The protein resides in the cytoplasm. Associates with the EF-Tu.GDP complex and induces the exchange of GDP to GTP. It remains bound to the aminoacyl-tRNA.EF-Tu.GTP complex up to the GTP hydrolysis stage on the ribosome. In Thermus thermophilus (strain ATCC 27634 / DSM 579 / HB8), this protein is Elongation factor Ts (tsf).